The primary structure comprises 432 residues: Glutamate-1-semialdehyde 2,1-aminomutase (432 aa).

At lysine 271 the chain carries N6-(pyridoxal phosphate)lysine.

This sequence belongs to the class-III pyridoxal-phosphate-dependent aminotransferase family. HemL subfamily. As to quaternary structure, homodimer. The cofactor is pyridoxal 5'-phosphate.

It is found in the cytoplasm. The enzyme catalyses (S)-4-amino-5-oxopentanoate = 5-aminolevulinate. It functions in the pathway porphyrin-containing compound metabolism; protoporphyrin-IX biosynthesis; 5-aminolevulinate from L-glutamyl-tRNA(Glu): step 2/2. Its pathway is porphyrin-containing compound metabolism; chlorophyll biosynthesis. This chain is Glutamate-1-semialdehyde 2,1-aminomutase, found in Prochlorococcus marinus (strain NATL2A).